A 171-amino-acid polypeptide reads, in one-letter code: Large ribosomal subunit protein uL10 (171 aa).

Belongs to the universal ribosomal protein uL10 family. Part of the ribosomal stalk of the 50S ribosomal subunit. The N-terminus interacts with L11 and the large rRNA to form the base of the stalk. The C-terminus forms an elongated spine to which L12 dimers bind in a sequential fashion forming a multimeric L10(L12)X complex.

Forms part of the ribosomal stalk, playing a central role in the interaction of the ribosome with GTP-bound translation factors. In Corynebacterium glutamicum (strain R), this protein is Large ribosomal subunit protein uL10.